The sequence spans 534 residues: MFSWVSKDARRKKEPELFQTVAEGLRQLYAQKLLPLEEHYRFHEFHSPALEDADFDNKPMVLLVGQYSTGKTTFIRHLIEQDFPGMRIGPEPTTDSFIAVMHGPTEGVVPGNALVVDPRRPFRKLNAFGNAFLNRFMCAQLPNPVLDSISIIDTPGILSGEKQRISRGYDFAAVLEWFAERVDRIILLFDAHKLDISDEFSEVIKALKNHEDKIRVVLNKADQIETQQLMRVYGALMWSLGKIINTPEVVRVYIGSFWSHPLLIPDNRKLFEAEEQDLFKDIQSLPRNAALRKLNDLIKRARLAKVHAYIISSLKKEMPNVFGKESKKKELVNNLGEIYQKIEREHQISPGDFPSLRKMQELLQTQDFSKFQALKPKLLDTVDDMLANDIARLMVMVRQEESLMPSQVVKGGAFDGTMNGPFGHGYGEGAGEGIDDVEWVVGKDKPTYDEIFYTLSPVNGKITGANAKKEMVKSKLPNTVLGKIWKLADVDKDGLLDDEEFALANHLIKVKLEGHELPADLPPHLVPPSKRRHE.

The residue at position 1 (methionine 1) is an N-acetylmethionine. The 232-residue stretch at phenylalanine 55 to proline 286 folds into the Dynamin-type G domain. Residues glycine 65–threonine 72 form a G1 motif region. Glycine 65–threonine 72 serves as a coordination point for ATP. Residues glutamate 91 to proline 92 form a G2 motif region. The G3 motif stretch occupies residues aspartate 153–glycine 156. Residues aspartate 198–glutamine 227 adopt a coiled-coil conformation. The tract at residues asparagine 219–aspartate 222 is G4 motif. Lysine 220 is a binding site for ATP. A region of interest (G5 motif) is located at residue isoleucine 243. An ATP-binding site is contributed by tryptophan 258. A phosphoserine mark is found at serine 355 and serine 456. The 89-residue stretch at aspartate 444 to arginine 532 folds into the EH domain. In terms of domain architecture, EF-hand spans leucine 476–lysine 511. Ca(2+) contacts are provided by aspartate 489, aspartate 491, aspartate 493, and glutamate 500.

It belongs to the TRAFAC class dynamin-like GTPase superfamily. Dynamin/Fzo/YdjA family. EHD subfamily. Homooligomer, and heterooligomer with EHD2, EHD3 and EHD4, ATP-binding is required for heterooligomerization. Interacts (via EH domain) with MICALL1 (via NPF1 motif); the interaction is direct and recruits EHD1 to membranes. Interacts with RAB35; the interaction is indirect through MICALL1 and recruits EHD1 to membranes. Interacts (via EH domain) with PACSIN2 (via NPF motifs); regulates localization to tubular recycling endosome membranes. Interacts with PACSIN1. Interacts with RAB8A. Interacts with FER1L5 (via second C2 domain). Interacts with MYOF. Interacts with ZFYVE20. Interacts (via EH domain) with RAB11FIP2.

Its subcellular location is the recycling endosome membrane. The protein resides in the early endosome membrane. It is found in the cell membrane. It localises to the cell projection. The protein localises to the cilium membrane. Its function is as follows. ATP- and membrane-binding protein that controls membrane reorganization/tubulation upon ATP hydrolysis. Acts in early endocytic membrane fusion and membrane trafficking of recycling endosomes. Recruited to endosomal membranes upon nerve growth factor stimulation, indirectly regulates neurite outgrowth. Plays a role in myoblast fusion. Involved in the unidirectional retrograde dendritic transport of endocytosed BACE1 and in efficient sorting of BACE1 to axons implicating a function in neuronal APP processing. Plays a role in the formation of the ciliary vesicle (CV), an early step in cilium biogenesis. Proposed to be required for the fusion of distal appendage vesicles (DAVs) to form the CV by recruiting SNARE complex component SNAP29. Is required for recruitment of transition zone proteins CEP290, RPGRIP1L, TMEM67 and B9D2, and of IFT20 following DAV reorganization before Rab8-dependent ciliary membrane extension. Required for the loss of CCP110 form the mother centriole essential for the maturation of the basal body during ciliogenesis. This Pongo abelii (Sumatran orangutan) protein is EH domain-containing protein 1.